The primary structure comprises 664 residues: CRISPR-associated DNA-binding protein Cas12m (664 aa).

The segment at 1–137 is recognition domain (REC1-N); that stretch reads MKRVTITIDG…AKYRELIGSD (137 aa). The interval 138-212 is recognition domain (REC2); the sequence is EETAQMDTEI…AAKDRIRAAG (75 aa). A recognition domain (REC1-C) region spans residues 213-270; it reads NDIENLEKDRQAAVIKAYNNSGLWWGNYNAVLESYKKARIKALKDGAELKYHRFDGSG. Positions 271–390 are wedge domain (WED); it reads RFTNQIQGGM…VWSVVFTFTT (120 aa). A linker region spans residues 391–404; it reads DCPTYDQRSSTGNR. A ruvC-I region spans residues 405-618; sequence CGLNLGWKKQ…KNGTQIEQVS (214 aa). The target nucleic-acid binding (TNB) stretch occupies residues 618–650; it reads STASSATCSACKGKMEQVDGIMWRCRECRALVD. Zn(2+)-binding residues include cysteine 625, cysteine 628, cysteine 642, and cysteine 645. The segment at 651–664 is ruvC-II; sequence QDINAAANLFREVL. Aspartate 652 provides a ligand contact to Mg(2+).

It belongs to the CRISPR-associated DNA-binding protein Cas12m family. Requires Mg(2+) as cofactor. Zn(2+) is required as a cofactor.

Functionally, CRISPR (clustered regularly interspaced short palindromic repeat), is an adaptive immune system that provides protection against mobile genetic elements (viruses, transposable elements and conjugative plasmids). CRISPR clusters contain sequences complementary to antecedent mobile elements and target invading nucleic acids. CRISPR clusters are transcribed and processed into CRISPR RNA (crRNA). Recognizes a short motif in the CRISPR repeat sequences (the 5' PAM or protospacer adjacent motif, 5'-CCN-3' in this organism) to help distinguish self versus nonself, as targets within the bacterial CRISPR locus do not have PAMs. Cas12m-crRNA binds DNA in a PAM-dependent, crRNA-guided fashion. DNA-binding probably inhibits transcription, leading to gene silencing. Upon expression in E.coli as a CRISPR region preferentially binds to its associated crRNA. Probably required for pre-crRNA processing to mature crRNA. This is CRISPR-associated DNA-binding protein Cas12m from Pelobacter propionicus (strain DSM 2379 / NBRC 103807 / OttBd1).